The sequence spans 108 residues: uncharacterized protein (108 aa).

Polar residues predominate over residues 1-15; sequence MSDSNSRLVYSTQTG. A disordered region spans residues 1–29; sequence MSDSNSRLVYSTQTGRIEEPKTAPVRPKG. Residues 16-29 are compositionally biased toward basic and acidic residues; sequence RIEEPKTAPVRPKG.

This sequence belongs to the SUI1 family.

This is an uncharacterized protein from Salmonella typhi.